The following is a 161-amino-acid chain: Glycine cleavage system H protein 3 (161 aa).

Residues 40–122 (TVTLGLTDVG…YGDAWIVKIK (83 aa)) form the Lipoyl-binding domain. Lys81 is modified (N6-lipoyllysine).

The protein belongs to the GcvH family. In terms of assembly, the glycine cleavage system is composed of four proteins: P, T, L and H. It depends on (R)-lipoate as a cofactor.

The glycine cleavage system catalyzes the degradation of glycine. The H protein shuttles the methylamine group of glycine from the P protein to the T protein. The polypeptide is Glycine cleavage system H protein 3 (Aquifex aeolicus (strain VF5)).